Reading from the N-terminus, the 709-residue chain is Septu protein PtuA (709 aa).

In terms of biological role, component of antiviral defense system Septu type II, composed of PtuA and PtuB. Expression of Septu type II in B.subtilis (strain BEST7003) confers resistance to phages SBSphiC and SpBeta. May be an ATPase. This is Septu protein PtuA from Bacillus mycoides (strain KBAB4) (Bacillus weihenstephanensis).